The sequence spans 339 residues: 3-isopropylmalate dehydrogenase (339 aa).

4 residues coordinate substrate: Arg88, Arg98, Arg122, and Asp212. 3 residues coordinate Mg(2+): Asp212, Asp236, and Asp240. 272–284 contributes to the NAD(+) binding site; that stretch reads GSAPDIAGQGIAD.

Belongs to the isocitrate and isopropylmalate dehydrogenases family. LeuB type 2 subfamily. Homodimer. Mg(2+) serves as cofactor. Mn(2+) is required as a cofactor.

The protein resides in the cytoplasm. It carries out the reaction (2R,3S)-3-isopropylmalate + NAD(+) = 4-methyl-2-oxopentanoate + CO2 + NADH. It participates in amino-acid biosynthesis; L-leucine biosynthesis; L-leucine from 3-methyl-2-oxobutanoate: step 3/4. Catalyzes the oxidation of 3-carboxy-2-hydroxy-4-methylpentanoate (3-isopropylmalate) to 3-carboxy-4-methyl-2-oxopentanoate. The product decarboxylates to 4-methyl-2 oxopentanoate. The sequence is that of 3-isopropylmalate dehydrogenase from Corynebacterium diphtheriae (strain ATCC 700971 / NCTC 13129 / Biotype gravis).